The following is a 347-amino-acid chain: MSVMFDPDTAIYPFPPKPTPLSIDEKAYYREKIKRLLKERNAVMVAHYYTDPEIQQLAEETGGCISDSLEMARFGAKHPASTLLVAGVRFMGETAKILSPEKTILMPTLQAECSLDLGCPVEEFNAFCDAHPDRTVVVYANTSAAVKARADWVVTSSIAVELIDHLDSLGEKIIWAPDKHLGCYVQKQTGADILCWQGACIVHDEFKTQALTRLQEEYPDAAILVHPESPQAIVEMADAVGSTSQLIAAAKTLPHQRLIVATDRGIFYKMQQAVPDKELLEAPTAGEGATCRSCAHCPWMAMNGLQAIAEALELEGSNHEVYVDERLLERALVPLNRMLDFAATLRG.

Residues His47 and Ser68 each contribute to the iminosuccinate site. Position 113 (Cys113) interacts with [4Fe-4S] cluster. Iminosuccinate contacts are provided by residues 139-141 and Ser156; that span reads YAN. Residue Cys200 participates in [4Fe-4S] cluster binding. Residues 226–228 and Thr243 contribute to the iminosuccinate site; that span reads HPE. Cys297 lines the [4Fe-4S] cluster pocket.

It belongs to the quinolinate synthase family. Type 1 subfamily. It depends on [4Fe-4S] cluster as a cofactor.

It localises to the cytoplasm. The catalysed reaction is iminosuccinate + dihydroxyacetone phosphate = quinolinate + phosphate + 2 H2O + H(+). It functions in the pathway cofactor biosynthesis; NAD(+) biosynthesis; quinolinate from iminoaspartate: step 1/1. Catalyzes the condensation of iminoaspartate with dihydroxyacetone phosphate to form quinolinate. This chain is Quinolinate synthase, found in Escherichia coli O45:K1 (strain S88 / ExPEC).